A 103-amino-acid chain; its full sequence is Large ribosomal subunit protein bL21 (103 aa).

This sequence belongs to the bacterial ribosomal protein bL21 family. As to quaternary structure, part of the 50S ribosomal subunit. Contacts protein L20.

In terms of biological role, this protein binds to 23S rRNA in the presence of protein L20. In Psychrobacter sp. (strain PRwf-1), this protein is Large ribosomal subunit protein bL21.